The sequence spans 113 residues: Hydrogenase maturation factor HybF (113 aa).

Ni(2+) contacts are provided by His-2 and Glu-3. 4 residues coordinate Zn(2+): Cys-73, Cys-76, Cys-89, and Cys-92.

This sequence belongs to the HypA/HybF family. HybF subfamily. Monomer.

Functionally, involved in the maturation of [NiFe] hydrogenases. Required for nickel insertion into the metal center of the hydrogenase. HybF is involved in maturation of hydrogenases 1 and 2. It may partially substitute for the function of HypA and vice versa. This chain is Hydrogenase maturation factor HybF, found in Escherichia coli (strain K12).